Reading from the N-terminus, the 391-residue chain is DNA polymerase IV (391 aa).

Residues 6 to 187 (IIHVDMDAFF…LPVEMLWGVG (182 aa)) form the UmuC domain. Mg(2+) contacts are provided by D10 and D105. E106 is an active-site residue.

The protein belongs to the DNA polymerase type-Y family. In terms of assembly, monomer. Requires Mg(2+) as cofactor.

It localises to the cytoplasm. The catalysed reaction is DNA(n) + a 2'-deoxyribonucleoside 5'-triphosphate = DNA(n+1) + diphosphate. Poorly processive, error-prone DNA polymerase involved in untargeted mutagenesis. Copies undamaged DNA at stalled replication forks, which arise in vivo from mismatched or misaligned primer ends. These misaligned primers can be extended by PolIV. Exhibits no 3'-5' exonuclease (proofreading) activity. May be involved in translesional synthesis, in conjunction with the beta clamp from PolIII. The chain is DNA polymerase IV from Carboxydothermus hydrogenoformans (strain ATCC BAA-161 / DSM 6008 / Z-2901).